A 153-amino-acid chain; its full sequence is MMATFSCVCCGTSTTSTYCGKRCERKHVYSETRNKRLELYKKYLLEPQKCALNGIVGHSCGMPCSIAEEACDQLPIVSRFCGQKHADLYDSLLKRSEQELLLEFLQKKMQELKLSHIVKMAKLESEVNAIRKSVASSFEDSVGCDDSSSVSKL.

The tract at residues 1–23 is C-1; sequence MMATFSCVCCGTSTTSTYCGKRC. The segment at 1 to 85 is interaction with TGB1; the sequence is MMATFSCVCC…IVSRFCGQKH (85 aa). Residues 19-47 are basic motif (BM); sequence CGKRCERKHVYSETRNKRLELYKKYLLEP. Positions 60–85 are C-2; the sequence is CGMPCSIAEEACDQLPIVSRFCGQKH. An interaction with replication protein alpha-A region spans residues 86-127; sequence ADLYDSLLKRSEQELLLEFLQKKMQELKLSHIVKMAKLESEV. Positions 92 to 132 form a coiled coil; that stretch reads LLKRSEQELLLEFLQKKMQELKLSHIVKMAKLESEVNAIRK. A Phosphoserine modification is found at serine 96.

The protein belongs to the virgaviridae suppressor of RNA silencing family. As to quaternary structure, homooligomer. Interacts (via C-terminus) with replication protein alpha-A. Interacts (via N-terminus) with the movement protein TGB1; this interaction targets gammab-TGB1 at the periphery of chloroplasts and plasmodesmata. Interacts with host autophagy protein ATG7; this interaction disrupts the host ATG7-ATG8 interaction to promote viral infection. Interacts (via BM region) with host STY46; this interaction inhibits the viral infection. Post-translationally, phosphorylated at Ser-96 by a host PKA-like kinase; the phosphorylation at this site seems to suppress host cell death. In terms of processing, serine-phosphorylated by host STY46 kinase.

The protein resides in the host chloroplast envelope. The protein localises to the host endoplasmic reticulum. It is found in the host cell junction. Its subcellular location is the host plasmodesma. In terms of biological role, suppressor of RNA-mediated gene silencing, also known as post-transcriptional gene silencing (PTGS), a mechanism of plant viral defense that limits the accumulation of viral RNAs. Promotes viral cell-to-cell long distance movement by enhancing the ATPase activity of TGB1. Enhances RNA helicase activity of replication protein alpha-A. Suppresses autophagy induced by the host as a defense mechanism against viral infection. The sequence is that of Suppressor of RNA silencing from Barley stripe mosaic virus (BSMV).